Reading from the N-terminus, the 156-residue chain is Ribosome maturation factor RimP (156 aa).

Belongs to the RimP family.

Its subcellular location is the cytoplasm. Its function is as follows. Required for maturation of 30S ribosomal subunits. This is Ribosome maturation factor RimP from Prochlorococcus marinus (strain NATL2A).